The chain runs to 101 residues: ATP synthase subunit c (101 aa).

The next 2 membrane-spanning stretches (helical) occupy residues 31 to 51 (AFAY…GAGQ) and 81 to 101 (AISE…IFVG).

The protein belongs to the ATPase C chain family. F-type ATPases have 2 components, F(1) - the catalytic core - and F(0) - the membrane proton channel. F(1) has five subunits: alpha(3), beta(3), gamma(1), delta(1), epsilon(1). F(0) has three main subunits: a(1), b(2) and c(10-14). The alpha and beta chains form an alternating ring which encloses part of the gamma chain. F(1) is attached to F(0) by a central stalk formed by the gamma and epsilon chains, while a peripheral stalk is formed by the delta and b chains.

The protein resides in the cell membrane. F(1)F(0) ATP synthase produces ATP from ADP in the presence of a proton or sodium gradient. F-type ATPases consist of two structural domains, F(1) containing the extramembraneous catalytic core and F(0) containing the membrane proton channel, linked together by a central stalk and a peripheral stalk. During catalysis, ATP synthesis in the catalytic domain of F(1) is coupled via a rotary mechanism of the central stalk subunits to proton translocation. In terms of biological role, key component of the F(0) channel; it plays a direct role in translocation across the membrane. A homomeric c-ring of between 10-14 subunits forms the central stalk rotor element with the F(1) delta and epsilon subunits. The sequence is that of ATP synthase subunit c from Mesomycoplasma hyopneumoniae (strain 7448) (Mycoplasma hyopneumoniae).